The chain runs to 654 residues: MICOS complex subunit MIC60-2 (654 aa).

Residues 1 to 12 (MRGSRNLLTQRL) constitute a mitochondrion transit peptide. Residues 13–20 (ASSRATGS) lie on the Mitochondrial matrix side of the membrane. Residues 21–43 (SGGLKFVGATVGAVTAGAAGVAG) form a helical membrane-spanning segment. The Mitochondrial intermembrane portion of the chain corresponds to 44–654 (YASYDNEFRK…AALTSIRSTY (611 aa)). Residues 115–129 (LKETTEPKKIEKKPE) are compositionally biased toward basic and acidic residues. The disordered stretch occupies residues 115–140 (LKETTEPKKIEKKPENPYIGAKTPLN).

It belongs to the MICOS complex subunit Mic60 family. Component of the mitochondrial contact site and cristae organizing system (MICOS) complex. As to expression, expressed in the gonads and muscle cells.

The protein localises to the mitochondrion inner membrane. It localises to the cytoplasm. Its function is as follows. Sustains mitochondrial morphology probably through maintaining cristae morphology. May act as a component of the MICOS complex, a large protein complex of the mitochondria. The protein is MICOS complex subunit MIC60-2 of Caenorhabditis elegans.